We begin with the raw amino-acid sequence, 251 residues long: Carboxy-S-adenosyl-L-methionine synthase (251 aa).

Residues Tyr-48, 73 to 75 (GCS), Asn-140, and Arg-207 contribute to the S-adenosyl-L-methionine site.

The protein belongs to the class I-like SAM-binding methyltransferase superfamily. Cx-SAM synthase family. Homodimer.

It carries out the reaction prephenate + S-adenosyl-L-methionine = carboxy-S-adenosyl-L-methionine + 3-phenylpyruvate + H2O. Catalyzes the conversion of S-adenosyl-L-methionine (SAM) to carboxy-S-adenosyl-L-methionine (Cx-SAM). This Hydrogenovibrio crunogenus (strain DSM 25203 / XCL-2) (Thiomicrospira crunogena) protein is Carboxy-S-adenosyl-L-methionine synthase.